The sequence spans 376 residues: UPF0754 membrane protein SE_1527 (376 aa).

A run of 2 helical transmembrane segments spans residues 4-24 (ILLV…TNMI) and 356-376 (TLGF…AIFV).

The protein belongs to the UPF0754 family.

The protein localises to the cell membrane. The polypeptide is UPF0754 membrane protein SE_1527 (Staphylococcus epidermidis (strain ATCC 12228 / FDA PCI 1200)).